A 126-amino-acid polypeptide reads, in one-letter code: Protein ApaG (126 aa).

One can recognise an ApaG domain in the interval 2–126 (SDPRYQVDVS…FRLAVPGALH (125 aa)).

This chain is Protein ApaG, found in Pseudomonas fluorescens (strain ATCC BAA-477 / NRRL B-23932 / Pf-5).